The primary structure comprises 879 residues: MSEQVGQREAVDSPQATGVKTPPEPCPLCRETGPPQPPSITEEGKTNEDIDFIWVACNKCDEWYHSACLFLGDEKWRGTIPKEIISTVETNFGDEGAWTNWVEWIGKWYCAPCLARSTSPSNPRPPRHPLVATMKRASIQPKDIDQAGKPLKRSASTSAPLLKSNIKRPRTSTKGQETASPEIDMKSEREQQAESTAGTPASDAPQGRPKRKTAQIDYRNLNNSIATPTHQWLELIADPEKYGRTILDANYPALPGKLLTRAWLESQPLPGQPSSISPDLLPTRFWGPDREPLIVRPENGGFSSLGGHLPSKDLTVQDVANLVGPDRMVDVIDVSSQHSSQWTLQKWAEYIQSSSGNTSVRNPKVYNVISLEISGTELAKKVKPPKIVREIDWVDNFWRFSAGAGGKDVKEKGRGNDSRESSEIRKEGSHLTEGDNAGGEIEEDLEGLKEKTNTPYPKVQLYCLMGMKGAWTDWHVDFAASSVYYTIHSGAKVKLSCFVSFFSPGSYHSQVFFFVKPTEQNLKAYAEWSGSYEKQQDTWLGDMVDEVRKVELHAGDTMIIPTGYIHAVYTPMDSIVFGGNFLHSYNVDTQLRLRQIEIDTKVPQRFRFPMFDRLCWYVADKYCSDLRHLRAYRPRATTTPKPPHFRVLQCLSYLANFLVSQTGILEDPEAEDKARKLVHDRIPGDIVKDPEGLAKELKWRVERELGALGLLGEEASGVEAEEFKSNGTANGSVKIKGKEVSRKRDRLSKVFDKKAISRTWDFHPPAWSENRQSPQIETTTVQLPRPSTSSSDAISGSGPGASPGASANGGANENEQAELTTMLVKQTRKRMRELDDGTVIEESQETTFVEKKTVWGPKLDKEKISQPQGKVEEDMDIDH.

Disordered regions lie at residues 1–45, 117–212, and 407–449; these read MSEQ…EEGK, STSP…PKRK, and KDVK…EGLK. The PHD-type zinc-finger motif lies at 23–116; sequence PEPCPLCRET…KWYCAPCLAR (94 aa). Composition is skewed to basic and acidic residues over residues 183–192 and 407–433; these read IDMKSEREQQ and KDVK…HLTE. The JmjC domain occupies 416 to 598; sequence NDSRESSEIR…TQLRLRQIEI (183 aa). A substrate-binding site is contributed by threonine 472. 2 residues coordinate Fe cation: histidine 475 and aspartate 477. Lysine 492 is a substrate binding site. Histidine 566 is a binding site for Fe cation. Residues 763-879 form a disordered region; it reads HPPAWSENRQ…KVEEDMDIDH (117 aa). The segment covering 769-782 has biased composition (polar residues); it reads ENRQSPQIETTTVQ. Residues 786–818 are compositionally biased toward low complexity; sequence PSTSSSDAISGSGPGASPGASANGGANENEQAE. Over residues 848–864 the composition is skewed to basic and acidic residues; it reads FVEKKTVWGPKLDKEKI.

Belongs to the JHDM1 histone demethylase family. Fe(2+) serves as cofactor.

It is found in the nucleus. It carries out the reaction N(6),N(6)-dimethyl-L-lysyl(36)-[histone H3] + 2 2-oxoglutarate + 2 O2 = L-lysyl(36)-[histone H3] + 2 formaldehyde + 2 succinate + 2 CO2. In terms of biological role, histone demethylase that specifically demethylates 'Lys-36' of histone H3, thereby playing a central role in histone code. In Cryptococcus neoformans var. neoformans serotype D (strain B-3501A) (Filobasidiella neoformans), this protein is JmjC domain-containing histone demethylation protein 1 (JHD1).